A 448-amino-acid polypeptide reads, in one-letter code: Hydroxycinnamoyl-CoA:piscidic acid hydroxycinnamoyltransferase (448 aa).

Residues histidine 153 and aspartate 395 each act as proton acceptor in the active site.

The protein belongs to the plant acyltransferase family. As to expression, highly expressed in root and rhizome. Expressed in senescent leaf and callus tissues. Expressed in detached leaf treated for 18 hours with ethephon, methyl jasmonate, salicylic acid or illuminated for 24 hours with UV light. Not expressed in mature leaf. Expressed at low levels in leaves and flowers.

The catalysed reaction is (2R,3S)-piscidate + (E)-4-coumaroyl-CoA = cimicifugate K + CoA. It carries out the reaction (2R,3S)-piscidate + (E)-caffeoyl-CoA = cimicifugate D + CoA. The enzyme catalyses (2R,3S)-piscidate + (E)-sinapoyl-CoA = cimicifugate J + CoA. It catalyses the reaction (2R,3S)-piscidate + (E)-feruloyl-CoA = cimicifugate E + CoA. Its pathway is phenylpropanoid metabolism. Catalyzes the formation of cimicifugic acids. Uses hydroxycinnamoyl-CoA thioesters as hydroxycinnamoyl donor substrates. Has a strict specificity for piscidic acid as an acceptor substrate as none of the various other acceptors tested including 4-hydroxyphenyllactic acid, malate, spermidine or tetrahydroxyhexanedioic acid are substrates. Donor substrates include 4-coumaroyl-CoA, caffeoyl-CoA, sinapoyl-CoA and feruloyl-CoA. No activity with cinnamoyl-CoA, isoferuloyl-CoA, 3,4-dimethoxycinnamoyl-CoA or 3,4-dihydroxybenzoyl-CoA as donors. In the reverse reaction with fukinolic acid and CoA as substrates, a formation of fukiic acid is evident. Hence, fukiic acid may also serve as an acceptor substrate. Involved in the biosynthesis of cimicifugic and possibly fukinolic acids. The polypeptide is Hydroxycinnamoyl-CoA:piscidic acid hydroxycinnamoyltransferase (Actaea racemosa (Black cohosh)).